We begin with the raw amino-acid sequence, 137 residues long: Large ribosomal subunit protein uL16 (137 aa).

Residues 1 to 20 are disordered; the sequence is MLQPSNRKYRKDFKGRNRGV. Over residues 7–17 the composition is skewed to basic residues; it reads RKYRKDFKGRN.

Belongs to the universal ribosomal protein uL16 family. In terms of assembly, part of the 50S ribosomal subunit.

Binds 23S rRNA and is also seen to make contacts with the A and possibly P site tRNAs. In Coxiella burnetii (strain CbuK_Q154) (Coxiella burnetii (strain Q154)), this protein is Large ribosomal subunit protein uL16.